The sequence spans 482 residues: O-acyltransferase ausP (482 aa).

Active-site proton acceptor residues include H180 and D412.

Belongs to the plant acyltransferase family. In terms of assembly, monomer.

Its pathway is secondary metabolite biosynthesis; terpenoid biosynthesis. O-acyltransferase; part of the gene cluster B that mediates the biosynthesis of the fungal meroterpenoid acetoxydehydroaustin. The first step of the pathway is the synthesis of 3,5-dimethylorsellinic acid by the polyketide synthase ausA. 3,5-dimethylorsellinic acid is then prenylated by the polyprenyl transferase ausN. Further epoxidation by the FAD-dependent monooxygenase ausM and cyclization by the probable terpene cyclase ausL lead to the formation of protoaustinoid A. Protoaustinoid A is then oxidized to spiro-lactone preaustinoid A3 by the combined action of the FAD-binding monooxygenases ausB and ausC, and the dioxygenase ausE. Acid-catalyzed keto-rearrangement and ring contraction of the tetraketide portion of preaustinoid A3 by ausJ lead to the formation of preaustinoid A4. The aldo-keto reductase ausK, with the help of ausH, is involved in the next step by transforming preaustinoid A4 into isoaustinone which is in turn hydroxylated by the P450 monooxygenase ausI to form austinolide. The cytochrome P450 monooxygenase ausG then modifies austinolide to austinol. Austinol is further acetylated to austin by the O-acetyltransferase ausP, which spontaneously changes to dehydroaustin. The cytochrome P450 monooxygenase then converts dehydroaustin is into 7-dehydrodehydroaustin. The hydroxylation catalyzed by ausR permits the second O-acetyltransferase ausQ to add an additional acetyl group to the molecule, leading to the formation of acetoxydehydroaustin. Due to genetic rearrangements of the clusters and the subsequent loss of some enzymes, the end product of the Penicillium brasilianum austinoid biosynthesis clusters is acetoxydehydroaustin. The protein is O-acyltransferase ausP of Penicillium brasilianum.